Reading from the N-terminus, the 567-residue chain is Protein phosphatase 1 regulatory inhibitor subunit 16B (567 aa).

Residues 15-55 adopt a coiled-coil conformation; the sequence is EKVPTLERLRAAQKRRAQQLKKWAQYEQDLQHRKRKHERKR. Ser69 carries the post-translational modification Phosphoserine. ANK repeat units lie at residues 100–129, 133–162, 228–257, and 261–290; these read DGLT…NVNA, ELWT…DLLA, QGAT…RVDV, and DGWE…SLSA. Residues Ser333, Ser337, and Ser350 each carry the phosphoserine modification. A disordered region spans residues 378 to 403; that stretch reads RTSTYNGDIRETRTDQENKDPNPRLE. The span at 385-403 shows a compositional bias: basic and acidic residues; the sequence is DIRETRTDQENKDPNPRLE. Position 476 is a phosphoserine (Ser476). Over residues 504 to 515 the composition is skewed to polar residues; that stretch reads SSMARTGESSSE. The interval 504–525 is disordered; the sequence is SSMARTGESSSEGKAPLIGGRT. Residues 530-559 form an ANK 5 repeat; that stretch reads SNGTSVYYTVTSGDPPLLKFKAPIEEMEEK. Cys563 is lipidated: S-palmitoyl cysteine. Position 564 is a cysteine methyl ester (Cys564). A lipid anchor (S-farnesyl cysteine) is attached at Cys564. Residues 565–567 constitute a propeptide, removed in mature form; that stretch reads RIS.

Interacts with PPP1CA, PPP1CB and MSN. Interacts (via its fourth ankyrin repeat) with the mature dimeric form of RPSA/LAMR1. Interacts with EEF1A1. Interacts with PTEN. Interacts with ECE1. In terms of processing, phosphorylated by PKA and, after PKA priming, by GSK3B. Phosphorylation by GSK3B reduces its association with PP1C and enhances PP1C activity. Dephosphorylation by its associated PP1C results in enhanced association with PP1C, but reduced PP1C activity.

The protein resides in the cell membrane. It is found in the nucleus. Its subcellular location is the cell projection. Its function is as follows. Regulator of protein phosphatase 1 (PP1) that acts as a positive regulator of pulmonary endothelial cell (EC) barrier function. Involved in the regulation of the PI3K/AKT signaling pathway, angiogenesis and endothelial cell proliferation. Regulates angiogenesis and endothelial cell proliferation through the control of ECE1 dephosphorylation, trafficking and activity. Protects the endothelial barrier from lipopolysaccharide (LPS)-induced vascular leakage. Involved in the regulation of endothelial cell filopodia extension. May be a downstream target for TGF-beta1 signaling cascade in endothelial cells. Involved in PKA-mediated moesin dephosphorylation which is important in EC barrier protection against thrombin stimulation. Promotes the interaction of PPP1CA with RPSA/LAMR1 and in turn facilitates the dephosphorylation of RPSA/LAMR1. Involved in the dephosphorylation of EEF1A1. The sequence is that of Protein phosphatase 1 regulatory inhibitor subunit 16B (PPP1R16B) from Homo sapiens (Human).